We begin with the raw amino-acid sequence, 180 residues long: MPLLNSVTTPYAEALLQVVNENLQTEEMVSEVKQLLELINDSPELEKALSSPILETDAKKKIIIEIFSNKVNSSLMNFLKLLADRQRIGILTSILERFLEIYRENSNIALATVTSAVELTDEQKGLITQKIINIAGTEKLELVTKIDPSLIGGFVASVGSKVIDASLASQIRKLGLSLSK.

The protein belongs to the ATPase delta chain family. F-type ATPases have 2 components, F(1) - the catalytic core - and F(0) - the membrane proton channel. F(1) has five subunits: alpha(3), beta(3), gamma(1), delta(1), epsilon(1). CF(0) has four main subunits: a(1), b(1), b'(1) and c(10-14). The alpha and beta chains form an alternating ring which encloses part of the gamma chain. F(1) is attached to F(0) by a central stalk formed by the gamma and epsilon chains, while a peripheral stalk is formed by the delta, b and b' chains.

The protein resides in the cellular thylakoid membrane. Its function is as follows. F(1)F(0) ATP synthase produces ATP from ADP in the presence of a proton or sodium gradient. F-type ATPases consist of two structural domains, F(1) containing the extramembraneous catalytic core and F(0) containing the membrane proton channel, linked together by a central stalk and a peripheral stalk. During catalysis, ATP synthesis in the catalytic domain of F(1) is coupled via a rotary mechanism of the central stalk subunits to proton translocation. Functionally, this protein is part of the stalk that links CF(0) to CF(1). It either transmits conformational changes from CF(0) to CF(1) or is implicated in proton conduction. This is ATP synthase subunit delta from Prochlorococcus marinus (strain MIT 9215).